Consider the following 440-residue polypeptide: Xaa-Pro dipeptidase (440 aa).

Mn(2+) is bound by residues aspartate 244, aspartate 255, histidine 335, glutamate 380, and glutamate 419.

The protein belongs to the peptidase M24B family. Bacterial-type prolidase subfamily. The cofactor is Mn(2+).

The catalysed reaction is Xaa-L-Pro dipeptide + H2O = an L-alpha-amino acid + L-proline. Functionally, splits dipeptides with a prolyl residue in the C-terminal position. The polypeptide is Xaa-Pro dipeptidase (Shewanella putrefaciens (strain CN-32 / ATCC BAA-453)).